Here is a 213-residue protein sequence, read N- to C-terminus: Cytidylate kinase (213 aa).

9–17 provides a ligand contact to ATP; it reads GPAASGKGT.

It belongs to the cytidylate kinase family. Type 1 subfamily.

The protein resides in the cytoplasm. It carries out the reaction CMP + ATP = CDP + ADP. It catalyses the reaction dCMP + ATP = dCDP + ADP. The sequence is that of Cytidylate kinase from Caulobacter vibrioides (strain ATCC 19089 / CIP 103742 / CB 15) (Caulobacter crescentus).